We begin with the raw amino-acid sequence, 437 residues long: Phosphomethylpyrimidine synthase (437 aa).

Residues Asn69, Met98, Tyr127, His163, 185-187 (SRG), 226-229 (DACR), and Glu265 each bind substrate. His269 provides a ligand contact to Zn(2+). Substrate is bound at residue Tyr292. His333 contacts Zn(2+). The [4Fe-4S] cluster site is built by Cys409, Cys412, and Cys416.

It belongs to the ThiC family. [4Fe-4S] cluster is required as a cofactor.

The catalysed reaction is 5-amino-1-(5-phospho-beta-D-ribosyl)imidazole + S-adenosyl-L-methionine = 4-amino-2-methyl-5-(phosphooxymethyl)pyrimidine + CO + 5'-deoxyadenosine + formate + L-methionine + 3 H(+). It participates in cofactor biosynthesis; thiamine diphosphate biosynthesis. Functionally, catalyzes the synthesis of the hydroxymethylpyrimidine phosphate (HMP-P) moiety of thiamine from aminoimidazole ribotide (AIR) in a radical S-adenosyl-L-methionine (SAM)-dependent reaction. In Clostridium botulinum (strain 657 / Type Ba4), this protein is Phosphomethylpyrimidine synthase.